A 142-amino-acid chain; its full sequence is Large ribosomal subunit protein uL13 (142 aa).

Belongs to the universal ribosomal protein uL13 family. In terms of assembly, part of the 50S ribosomal subunit.

Its function is as follows. This protein is one of the early assembly proteins of the 50S ribosomal subunit, although it is not seen to bind rRNA by itself. It is important during the early stages of 50S assembly. This is Large ribosomal subunit protein uL13 from Edwardsiella ictaluri (strain 93-146).